The primary structure comprises 102 residues: uncharacterized protein (102 aa).

The 55-residue stretch at 48 to 102 folds into the HTH cro/C1-type domain; sequence LNDKRKSLGIELSMLELQTGVSISTLNRLFQDPSQVRFTTVFLVAQTLGVSLCAI. Residues 59-78 constitute a DNA-binding region (H-T-H motif); that stretch reads LSMLELQTGVSISTLNRLFQ.

This is an uncharacterized protein from Haemophilus influenzae (strain ATCC 51907 / DSM 11121 / KW20 / Rd).